The sequence spans 25 residues: Css54 (25 aa).

As to expression, expressed by the venom gland.

It is found in the secreted. Its subcellular location is the target cell membrane. Functionally, amphipathic peptide that shows antibacterial activity against E.coli (MIC=12.5 ug/ml) and S.aureus (MIC=12.5 ug/ml). Has hemolytic activity against human erythrocytes (25 uM provokes 83% of hemolysis). May act by disrupting the integrity of the bacterial cell membrane. Increases efficacy of antibiotics (ethambutol, pyrazinamide, isoniazid, rifampicin) when tested against S.aureus, probably by facilitating their incorporation into the bacteria. The protein is Css54 of Centruroides suffusus (Durango bark scorpion).